Here is a 434-residue protein sequence, read N- to C-terminus: MKTIFALSSGRPPAGIAVIRISGSAAADTACLLTRKKIPEARRAVLRNLYDPDSGEQLDQSLLLWLPAPKTVTGEDLLELHVHGGRAVIDAVLKTLEKLPDLRPAEAGEFTRRAFENGVISLHEAEGLGDLLTAETASQRRAALMMSGGALGRQISAWQDRLLALSGQIEASFDFAEDIEEDETESRQHLAVMKDKIAALIAEHRQFENRPTMERLRDGLRVVLAGRPNAGKSTLINALTGQDIAITAPIAGTTRDVIEVSFALKGIPMRFSDTAGLHESDDLIEKAGIERAQRAIEEADILLWLGQAEEAPKTDGEVLVLYPQIDLPERHPIPEKIDIAVSAVTGEGIDRLQEKLVEIGKKILPKEDEVTLNRRQRQLVKEAADSLALALDAEDMLIIAEAIRQACRCYDRLTGKAGVENMLDNLFSRFCIGK.

(6S)-5-formyl-5,6,7,8-tetrahydrofolate-binding residues include Arg-20, Glu-79, and Val-119. The TrmE-type G domain occupies 219–361 (GLRVVLAGRP…LQEKLVEIGK (143 aa)). GTP is bound by residues 229–234 (NAGKST), 248–254 (APIAGTT), and 273–276 (DTAG). Residues Ser-233 and Thr-254 each coordinate Mg(2+). Lys-434 lines the (6S)-5-formyl-5,6,7,8-tetrahydrofolate pocket.

This sequence belongs to the TRAFAC class TrmE-Era-EngA-EngB-Septin-like GTPase superfamily. TrmE GTPase family. Homodimer. Heterotetramer of two MnmE and two MnmG subunits. Requires K(+) as cofactor.

The protein localises to the cytoplasm. In terms of biological role, exhibits a very high intrinsic GTPase hydrolysis rate. Involved in the addition of a carboxymethylaminomethyl (cmnm) group at the wobble position (U34) of certain tRNAs, forming tRNA-cmnm(5)s(2)U34. This Zymomonas mobilis subsp. mobilis (strain ATCC 31821 / ZM4 / CP4) protein is tRNA modification GTPase MnmE.